Here is a 217-residue protein sequence, read N- to C-terminus: External core antigen (217 aa).

A signal peptide spans 1–19 (MYLFHLCLVFACVPCPTFQ). Positions 26-28 (GWL) are HBEAG. Residues 180 to 217 (RRGGARASRSPRRRTPSPRRRRSQSPRRRRSQSPSANC) are disordered. Residues 188–210 (RSPRRRTPSPRRRRSQSPRRRRS) show a composition bias toward basic residues. The stretch at 189 to 195 (SPRRRTP) is one 1; half-length repeat. A 3 X 8 AA repeats of S-P-R-R-R-R-S-Q region spans residues 189-211 (SPRRRTPSPRRRRSQSPRRRRSQ). The propeptide occupies 189-217 (SPRRRTPSPRRRRSQSPRRRRSQSPSANC). 2 tandem repeats follow at residues 196–203 (SPRRRRSQ) and 204–211 (SPRRRRSQ).

The protein belongs to the orthohepadnavirus precore antigen family. As to quaternary structure, homodimerizes. In terms of processing, phosphorylated. Post-translationally, cleaved by host furin.

Its subcellular location is the secreted. The protein resides in the host nucleus. May regulate immune response to the intracellular capsid in acting as a T-cell tolerogen, by having an immunoregulatory effect which prevents destruction of infected cells by cytotoxic T-cells. This immune regulation may predispose to chronicity during perinatal infections and prevent severe liver injury during adult infections. The sequence is that of External core antigen from Marmota monax (Woodchuck).